Here is a 255-residue protein sequence, read N- to C-terminus: EEF1A lysine methyltransferase 4 (255 aa).

S-adenosyl-L-methionine-binding residues include W26 and Y30. The residue at position 39 (Y39) is a Phosphotyrosine. S-adenosyl-L-methionine-binding positions include W41, G66, 88 to 89, 113 to 114, and K130; these read DY and DV. The Required for methyltransferase activity motif lies at 129–134; that stretch reads EKGTLD.

Belongs to the methyltransferase superfamily.

It catalyses the reaction L-lysyl-[protein] + S-adenosyl-L-methionine = N(6)-methyl-L-lysyl-[protein] + S-adenosyl-L-homocysteine + H(+). The enzyme catalyses N(6)-methyl-L-lysyl-[protein] + S-adenosyl-L-methionine = N(6),N(6)-dimethyl-L-lysyl-[protein] + S-adenosyl-L-homocysteine + H(+). The catalysed reaction is N(6),N(6)-dimethyl-L-lysyl-[protein] + S-adenosyl-L-methionine = N(6),N(6),N(6)-trimethyl-L-lysyl-[protein] + S-adenosyl-L-homocysteine + H(+). In terms of biological role, protein-lysine methyltransferase that efficiently catalyzes three successive methylations on 'Lys-36' in eukaryotic translation elongation factor 1 alpha (EEF1A1 or EEF1A2). This chain is EEF1A lysine methyltransferase 4, found in Mus musculus (Mouse).